The chain runs to 237 residues: Octanoyltransferase (237 aa).

A BPL/LPL catalytic domain is found at 27 to 210; sequence SGGDDILLLL…EFYHIFQPAG (184 aa). Substrate contacts are provided by residues 72–79, 139–141, and 152–154; these read RGGNVTCH, SLG, and GMA. Cysteine 170 functions as the Acyl-thioester intermediate in the catalytic mechanism.

Belongs to the LipB family.

The protein localises to the cytoplasm. The enzyme catalyses octanoyl-[ACP] + L-lysyl-[protein] = N(6)-octanoyl-L-lysyl-[protein] + holo-[ACP] + H(+). It participates in protein modification; protein lipoylation via endogenous pathway; protein N(6)-(lipoyl)lysine from octanoyl-[acyl-carrier-protein]: step 1/2. Functionally, catalyzes the transfer of endogenously produced octanoic acid from octanoyl-acyl-carrier-protein onto the lipoyl domains of lipoate-dependent enzymes. Lipoyl-ACP can also act as a substrate although octanoyl-ACP is likely to be the physiological substrate. The polypeptide is Octanoyltransferase (Desulfovibrio desulfuricans (strain ATCC 27774 / DSM 6949 / MB)).